The sequence spans 69 residues: Arabinogalactan protein 24 (69 aa).

An N-terminal signal peptide occupies residues 1–25; it reads MMMMTKMFVQIAVVCLLATMAVVSA. 4 positions are modified to 4-hydroxyproline: P34, P36, P38, and P40. 4 O-linked (Ara...) hydroxyproline glycosylation sites follow: P34, P36, P38, and P40. Residue S42 is the site of GPI-anchor amidated serine attachment. Residues 43 to 69 constitute a propeptide, removed in mature form; sequence SSTVVSATNMFTVLAIAAVALVVGSNH.

The protein belongs to the AG-peptide AGP family. Contains 4-hydroxyproline; hydroxylated on Pro-34, Pro-36, Pro-38 and Pro-40. Post-translationally, O-glycosylated on hydroxyprolines; noncontiguous hydroxylproline residues are glycosylated with arabinogalactan.

It is found in the cell membrane. Functionally, proteoglycan that seems to be implicated in diverse developmental roles such as differentiation, cell-cell recognition, embryogenesis and programmed cell death. The chain is Arabinogalactan protein 24 from Arabidopsis thaliana (Mouse-ear cress).